The following is a 1151-amino-acid chain: Cation channel sperm-associated protein subunit gamma 1 (1151 aa).

An N-terminal signal peptide occupies residues methionine 1 to alanine 38. Residues glutamate 39–serine 1063 lie on the Extracellular side of the membrane. Asparagine 356 carries an N-linked (GlcNAc...) asparagine glycan. Residues phenylalanine 1064 to cysteine 1084 traverse the membrane as a helical segment. At leucine 1085–alanine 1151 the chain is on the cytoplasmic side. Residues serine 1113–serine 1123 show a composition bias toward low complexity. The segment at serine 1113 to alanine 1151 is disordered.

The protein belongs to the CATSPERG family.

Its subcellular location is the membrane. The sequence is that of Cation channel sperm-associated protein subunit gamma 1 (Catsperg1) from Mus musculus (Mouse).